Consider the following 501-residue polypeptide: Symplectin (501 aa).

Positions 20 to 287 constitute a CN hydrolase domain; sequence PKTDMETREE…SKLLVAEILP (268 aa). Glutamate 60 functions as the Proton acceptor in the catalytic mechanism. Catalysis depends on lysine 163, which acts as the Proton donor. Cysteine 196 functions as the Nucleophile in the catalytic mechanism. At cysteine 390 the chain carries S-(coelenterazin-3a-yl)cysteine.

This sequence belongs to the carbon-nitrogen hydrolase superfamily. BTD/VNN family. Photogenic gland (at protein level).

In terms of biological role, monovalent ion-dependent bioluminescence photoprotein. Displays an emission peak at 470 nm (blue light). Trace amounts of monovalent ion trigger the intramolecular oxidation of the chromophore, didehydrocoelenterazine, with the emission of light. The protein is Symplectin of Sthenoteuthis oualaniensis (Purpleback flying squid).